Here is a 284-residue protein sequence, read N- to C-terminus: L-ribulose-5-phosphate 3-epimerase UlaE (284 aa).

The protein belongs to the L-ribulose-5-phosphate 3-epimerase family.

It carries out the reaction L-ribulose 5-phosphate = L-xylulose 5-phosphate. It participates in cofactor degradation; L-ascorbate degradation; D-xylulose 5-phosphate from L-ascorbate: step 3/4. Catalyzes the isomerization of L-xylulose-5-phosphate to L-ribulose-5-phosphate. Is involved in the anaerobic L-ascorbate utilization. The sequence is that of L-ribulose-5-phosphate 3-epimerase UlaE from Escherichia coli O17:K52:H18 (strain UMN026 / ExPEC).